The chain runs to 1138 residues: Nonsense-mediated mRNA decay factor SMG7 (1138 aa).

At serine 2 the chain carries N-acetylserine. TPR repeat units lie at residues 152 to 185 (QHCL…VPSN) and 187 to 219 (QPYN…KFPF). Disordered stretches follow at residues 515-612 (ATDG…LPSR), 649-745 (STAH…YQQA), 838-871 (QPNM…KSSP), 990-1090 (SLPA…PSME), and 1106-1138 (SSMM…NPPH). Position 519 is a phosphoserine (serine 519). The span at 525-537 (VLSTGRNPSNSCD) shows a compositional bias: polar residues. The span at 548–582 (ENIKPREVNQGRSFPPKEVKSQTELRKTPVSEARK) shows a compositional bias: basic and acidic residues. Threonine 575 carries the post-translational modification Phosphothreonine. 2 stretches are compositionally biased toward polar residues: residues 584–597 (PVTQ…NSQF) and 649–673 (STAH…SQQR). A compositionally biased stretch (low complexity) spans 674–721 (PSGPGPMNQGPQQSQPPSQPPLTSLPAQPTAQSTSQLQVQALAQQQQS). Residues serine 732 and serine 848 each carry the phosphoserine modification. Over residues 854–868 (PEQDPVPRMPFEDPK) the composition is skewed to basic and acidic residues. Positions 990-999 (SLPASSDHST) are enriched in polar residues. Positions 1000–1026 (PASQSPHSSNPSSLPSSPPTHNHNSAP) are enriched in low complexity. A compositionally biased stretch (basic and acidic residues) spans 1037 to 1051 (DNRDRRPADRWKTDK). Residues 1063-1082 (SATSSSESSWHQASTPSGTW) are compositionally biased toward polar residues. Residues 1118–1132 (QLLMQQKQKQQRGQG) are compositionally biased toward low complexity.

Part of a complex that contains SMG5, SMG7, PPP2CA, a short isoform of UPF3A (isoform UPF3AS, but not isoform UPF3AL) and phosphorylated UPF1. Interacts with DHX34; the interaction is RNA-independent.

The protein resides in the cytoplasm. It localises to the nucleus. In terms of biological role, plays a role in nonsense-mediated mRNA decay. Recruits UPF1 to cytoplasmic mRNA decay bodies. Together with SMG5 is thought to provide a link to the mRNA degradation machinery involving exonucleolytic pathways, and to serve as an adapter for UPF1 to protein phosphatase 2A (PP2A), thereby triggering UPF1 dephosphorylation. This Mus musculus (Mouse) protein is Nonsense-mediated mRNA decay factor SMG7.